A 367-amino-acid polypeptide reads, in one-letter code: Aflatoxin B1 aldehyde reductase member 2 (367 aa).

A compositionally biased stretch (low complexity) spans 1 to 31 (MLRAASRAVGRAAVRSAQRSGTSVGRPLAMS). A disordered region spans residues 1–45 (MLRAASRAVGRAAVRSAQRSGTSVGRPLAMSRPPPPRAASGAPLR). The N-terminal 46 residues, 1–46 (MLRAASRAVGRAAVRSAQRSGTSVGRPLAMSRPPPPRAASGAPLRP), are a transit peptide targeting the mitochondrion. At serine 40 the chain carries Phosphoserine. Threonine 48 is modified (phosphothreonine). Aspartate 80 lines the NADP(+) pocket. Tyrosine 85 acts as the Proton donor in catalysis. Lysine 136 carries the post-translational modification N6-acetyllysine. Histidine 149 contacts substrate. NADP(+) is bound by residues 179–180 (SN), glutamine 205, 234–244 (NPLAGGLLTGK), and arginine 258. N6-succinyllysine is present on lysine 244. Residues tyrosine 268 and arginine 271 each contribute to the substrate site. 326-334 (SSLEQLEQN) contributes to the NADP(+) binding site. Arginine 367 contacts substrate.

It belongs to the aldo/keto reductase family. Aldo/keto reductase 2 subfamily. In terms of assembly, homodimer. As to expression, expressed in liver, kidney, testis and brain with low levels in skeletal muscle, spleen, heart and lung.

It is found in the mitochondrion. The protein localises to the golgi apparatus. It localises to the cytoplasm. The enzyme catalyses 4-hydroxybutanoate + NADP(+) = succinate semialdehyde + NADPH + H(+). Inhibited by citrate, succinate and tartrate. In terms of biological role, catalyzes the NADPH-dependent reduction of succinic semialdehyde to gamma-hydroxybutyrate. May have an important role in producing the neuromodulator gamma-hydroxybutyrate (GHB). Has broad substrate specificity. Can reduce the dialdehyde protein-binding form of aflatoxin B1 (AFB1) to the non-binding AFB1 dialcohol. May be involved in protection of liver against the toxic and carcinogenic effects of AFB1, a potent hepatocarcinogen. The polypeptide is Aflatoxin B1 aldehyde reductase member 2 (Mus musculus (Mouse)).